Reading from the N-terminus, the 213-residue chain is Heat shock protein 27 (213 aa).

2 positions are modified to phosphoserine: serine 58 and serine 75. One can recognise a sHSP domain in the interval 71 to 182; it reads SRRASGGPNA…SERIVQIQQT (112 aa). The interval 157–213 is disordered; it reads VLTLKAPPPPSKEQAKSERIVQIQQTGPAHLSVKAPAPEAGDGKAENGSGEKMETSK. The span at 197–213 shows a compositional bias: basic and acidic residues; the sequence is GDGKAENGSGEKMETSK.

The protein belongs to the small heat shock protein (HSP20) family.

The polypeptide is Heat shock protein 27 (Hsp27) (Drosophila melanogaster (Fruit fly)).